A 473-amino-acid polypeptide reads, in one-letter code: Chromosomal replication initiator protein DnaA (473 aa).

The tract at residues 1-73 (MTNIEQDRWS…LSCWQAEMPQ (73 aa)) is domain I, interacts with DnaA modulators. The tract at residues 73 to 129 (QVHRVDLTVRTAMRCAAPAKDAPAHAEPRRDDGRPAPELRATAIAPVSATHEALGGS) is domain II. A domain III, AAA+ region region spans residues 130–352 (PLDPRLTFGS…GAINRLLAHS (223 aa)). The ATP site is built by Gly177, Gly179, Lys180, and Thr181. The domain IV, binds dsDNA stretch occupies residues 353-473 (KLNAQPVTLE…VELLKRQLQE (121 aa)).

Belongs to the DnaA family. Oligomerizes as a right-handed, spiral filament on DNA at oriC.

The protein localises to the cytoplasm. Plays an essential role in the initiation and regulation of chromosomal replication. ATP-DnaA binds to the origin of replication (oriC) to initiate formation of the DNA replication initiation complex once per cell cycle. Binds the DnaA box (a 9 base pair repeat at the origin) and separates the double-stranded (ds)DNA. Forms a right-handed helical filament on oriC DNA; dsDNA binds to the exterior of the filament while single-stranded (ss)DNA is stabiized in the filament's interior. The ATP-DnaA-oriC complex binds and stabilizes one strand of the AT-rich DNA unwinding element (DUE), permitting loading of DNA polymerase. After initiation quickly degrades to an ADP-DnaA complex that is not apt for DNA replication. Binds acidic phospholipids. The sequence is that of Chromosomal replication initiator protein DnaA from Rhodopseudomonas palustris (strain BisB18).